We begin with the raw amino-acid sequence, 792 residues long: Endonuclease MutS2 (792 aa).

ATP is bound at residue 334–341; that stretch reads GPNTGGKT. Residues 717-792 enclose the Smr domain; it reads INLIGKTTDE…DAGVTIATFK (76 aa).

The protein belongs to the DNA mismatch repair MutS family. MutS2 subfamily. As to quaternary structure, homodimer. Binds to stalled ribosomes, contacting rRNA.

Functionally, endonuclease that is involved in the suppression of homologous recombination and thus may have a key role in the control of bacterial genetic diversity. Acts as a ribosome collision sensor, splitting the ribosome into its 2 subunits. Detects stalled/collided 70S ribosomes which it binds and splits by an ATP-hydrolysis driven conformational change. Acts upstream of the ribosome quality control system (RQC), a ribosome-associated complex that mediates the extraction of incompletely synthesized nascent chains from stalled ribosomes and their subsequent degradation. Probably generates substrates for RQC. This is Endonuclease MutS2 from Agathobacter rectalis (strain ATCC 33656 / DSM 3377 / JCM 17463 / KCTC 5835 / VPI 0990) (Eubacterium rectale).